Here is a 523-residue protein sequence, read N- to C-terminus: Calcium uptake protein 3, mitochondrial (523 aa).

Residues 1-6 constitute a mitochondrion transit peptide; it reads MAALRR. A disordered region spans residues 18-48; the sequence is LAPQQPFLSPWGRPAGTAPGMSGRPFSGREE. Residues 225–260 enclose the EF-hand 1 domain; that stretch reads KPHAGFRIAFNMFDTDGNEMVDKKEFLVLQEIFRKK. Asp-238, Asp-240, Asn-242, Met-244, Asp-246, and Glu-249 together coordinate Ca(2+). Residues 414–429 form the EF-hand 2; degenerate domain; sequence ITFDEFRSFFQFLNNL. Residues 463 to 498 form the EF-hand 3 domain; that stretch reads LSPHLVNTVFKIFDVDKDDQLSYKEFIGIMKDRLHR. Positions 476, 478, 480, 482, and 487 each coordinate Ca(2+).

This sequence belongs to the MICU1 family. MICU3 subfamily. In terms of assembly, heterodimer; disulfide-linked; heterodimerizes with MICU1. Component of the uniplex complex, composed of MCU, EMRE/SMDT1, MICU1 and MICU3 in a 4:4:1:1 stoichiometry.

The protein localises to the mitochondrion intermembrane space. Its subcellular location is the mitochondrion inner membrane. Functionally, tissue-specific calcium sensor of the mitochondrial calcium uniporter (MCU) channel, which specifically regulates MCU channel activity in the central nervous system and skeletal muscle. Senses calcium level via its EF-hand domains: compared to MICU1 and MICU2, MICU3 has a higher affinity for calcium. MICU1 and MICU3 form a disulfide-linked heterodimer that stimulates and inhibits MCU activity, depending on the concentration of calcium. At low calcium levels, MICU1 occludes the pore of the MCU channel, preventing mitochondrial calcium uptake. At higher calcium levels, calcium-binding to MICU1 and MICU3 induces a conformational change that weakens MCU-MICU1 interactions and moves the MICU1-MICU3 heterodimer away from the pore, allowing calcium permeation through the MCU channel. The high calcium affinity of MICU3 lowers the calcium threshold necessary for calcium permeation through the MCU channel. The MICU1-MICU3 heterodimer promotes flexibility of neurotransmission in neuronal cells by enhancing mitochondrial calcium uptake in presynapses. It is also required to increase mitochondrial calcium uptake in skeletal muscle cells, thereby increasing ATP production. The chain is Calcium uptake protein 3, mitochondrial from Rattus norvegicus (Rat).